A 164-amino-acid polypeptide reads, in one-letter code: UPF0303 protein RHE_CH02903 (164 aa).

It belongs to the UPF0303 family.

In Rhizobium etli (strain ATCC 51251 / DSM 11541 / JCM 21823 / NBRC 15573 / CFN 42), this protein is UPF0303 protein RHE_CH02903.